Here is a 548-residue protein sequence, read N- to C-terminus: MAAKDVKFGNDARVKMLEGVNVLADAVKVTLGPKGRNVVLDKSFGAPTITKDGVSVAREIELEDKFQNMGAQMVKEVASKANDAAGDGTTTATVLAQAIVNEGLKAVAAGMNPMDLKRGIDKAVIAAVEQLKELSVECNDTKAIAQVGTISANSDSSVGNIIAEAMEKVGRDGVITVEEGQALQDELDVVEGMQFDRGYLSPYFINNQEAGSVELENPFILLIDKKVSNIRELLPALEAVAKASRPLLIIAEDVEGEALATLVVNNMRGIVKVAAVKAPGFGDRRKAMLQDIAILTGGIVISEEVGLELEKVALEDLGQAKRVAITKENTTIIDGMGEEAMIQGRVAQIRQQIEDATSDYDKEKLQERVAKLAGGVAVIKVGAATEVEMKEKKDRVEDALHATRAAVEEGVVAGGGVALIRAASKIVDLEGDNEEQNVGIRVALRAMEAPIRQITKNAGDEESVVANNVKAGEGSYGYNAATGEYGDMLEMGILDPTKVTRSALQFAASVAGLMITTEAMVTDLPQKDGAGMPDMGGMGGMGGMGGMM.

ATP is bound by residues 30–33 (TLGP), Lys51, 87–91 (DGTTT), Gly415, 479–481 (NAA), and Asp495.

The protein belongs to the chaperonin (HSP60) family. Forms a cylinder of 14 subunits composed of two heptameric rings stacked back-to-back. Interacts with the co-chaperonin GroES.

Its subcellular location is the cytoplasm. The enzyme catalyses ATP + H2O + a folded polypeptide = ADP + phosphate + an unfolded polypeptide.. Functionally, together with its co-chaperonin GroES, plays an essential role in assisting protein folding. The GroEL-GroES system forms a nano-cage that allows encapsulation of the non-native substrate proteins and provides a physical environment optimized to promote and accelerate protein folding. This chain is Chaperonin GroEL, found in Vibrio campbellii (strain ATCC BAA-1116).